The chain runs to 104 residues: Cuticle protein 67, isoform B (104 aa).

7 repeat units span residues 7–10, 14–17, 21–24, 28–31, 85–88, 92–95, and 98–101.

Component of the cuticle of migratory locust which contains more than 100 different structural proteins. The sequence is that of Cuticle protein 67, isoform B from Locusta migratoria (Migratory locust).